The chain runs to 162 residues: Peptide methionine sulfoxide reductase MsrA (162 aa).

The active site involves cysteine 16.

It belongs to the MsrA Met sulfoxide reductase family.

It catalyses the reaction L-methionyl-[protein] + [thioredoxin]-disulfide + H2O = L-methionyl-(S)-S-oxide-[protein] + [thioredoxin]-dithiol. The enzyme catalyses [thioredoxin]-disulfide + L-methionine + H2O = L-methionine (S)-S-oxide + [thioredoxin]-dithiol. In terms of biological role, has an important function as a repair enzyme for proteins that have been inactivated by oxidation. Catalyzes the reversible oxidation-reduction of methionine sulfoxide in proteins to methionine. The sequence is that of Peptide methionine sulfoxide reductase MsrA from Geobacter sulfurreducens (strain ATCC 51573 / DSM 12127 / PCA).